The following is a 288-amino-acid chain: Release factor glutamine methyltransferase (288 aa).

2 residues coordinate S-adenosyl-L-methionine: D142 and N186. N186–Y189 lines the substrate pocket.

Belongs to the protein N5-glutamine methyltransferase family. PrmC subfamily.

The enzyme catalyses L-glutaminyl-[peptide chain release factor] + S-adenosyl-L-methionine = N(5)-methyl-L-glutaminyl-[peptide chain release factor] + S-adenosyl-L-homocysteine + H(+). Its function is as follows. Methylates the class 1 translation termination release factors RF1/PrfA and RF2/PrfB on the glutamine residue of the universally conserved GGQ motif. This is Release factor glutamine methyltransferase from Mycobacterium leprae (strain TN).